Here is a 548-residue protein sequence, read N- to C-terminus: 5-epi-aristolochene synthase 3 (548 aa).

Residues Asp-301, Asp-305, Asp-444, Thr-448, and Glu-452 each coordinate Mg(2+). Residues 301–305 (DDTFD) carry the DDXXD motif motif.

Belongs to the terpene synthase family. Monomer. The cofactor is Mg(2+). In terms of tissue distribution, expressed in roots, but not in shoots.

The protein localises to the cytoplasm. It catalyses the reaction (2E,6E)-farnesyl diphosphate = (+)-5-epi-aristolochene + diphosphate. It functions in the pathway secondary metabolite biosynthesis; terpenoid biosynthesis. Functionally, catalyzes the cyclization of trans,trans-farnesyl diphosphate (FPP) to the bicyclic intermediate 5-epi-aristolochene, initial step in the conversion of FPP to the sesquiterpenoid antifungal phytoalexin capsidiol. Produces germacrene A as an enzyme-bound intermediate that is not released by the enzyme, but is further cyclized to produce the bicyclic 5-epi-aristolochene. The polypeptide is 5-epi-aristolochene synthase 3 (Nicotiana attenuata (Coyote tobacco)).